We begin with the raw amino-acid sequence, 249 residues long: tRNA pseudouridine synthase A (249 aa).

Aspartate 52 acts as the Nucleophile in catalysis. Tyrosine 111 contacts substrate.

The protein belongs to the tRNA pseudouridine synthase TruA family. In terms of assembly, homodimer.

It catalyses the reaction uridine(38/39/40) in tRNA = pseudouridine(38/39/40) in tRNA. Formation of pseudouridine at positions 38, 39 and 40 in the anticodon stem and loop of transfer RNAs. The protein is tRNA pseudouridine synthase A of Brachyspira hyodysenteriae (strain ATCC 49526 / WA1).